Consider the following 2454-residue polypeptide: Probable serine/threonine-protein kinase DDB_G0277071 (2454 aa).

Over residues 31 to 51 (TSSLTTTTTTTTTTTTTTSTT) the composition is skewed to low complexity. Disordered stretches follow at residues 31-57 (TSSLTTTTTTTTTTTTTTSTTHNHESN), 206-265 (QQQL…QKQN), 340-612 (PRPP…LKIE), 963-1051 (NNIN…NENE), 1201-1330 (SSDD…SNPL), and 1342-1528 (ISKG…SNNT). Positions 259 to 307 (KQQQKQNSQQQQQQQQQQQQQQQQQQQQQQQQQQQQQQQQQQQKLNIHE) form a coiled coil. Composition is skewed to low complexity over residues 346 to 399 (QQHQ…NITP) and 406 to 428 (PSSVTSPISTSTNPPSNNPKPTS). Positions 429 to 444 (IGQIQSLHYHNPSLYQ) are enriched in polar residues. 2 stretches are compositionally biased toward low complexity: residues 450–461 (NRNRGNNNNNNN) and 475–536 (SSTV…NTPN). Positions 553-568 (GGIGGGGGGGSGGGGI) are enriched in gly residues. Low complexity-rich tracts occupy residues 963 to 1048 (NNIN…TTTN), 1201 to 1248 (SSDD…TGGP), 1275 to 1284 (NSSNNNNTSS), 1299 to 1324 (SGSSTSSPSTLISTPSTLASTPPTTG), and 1346 to 1403 (SPAS…SVST). Positions 1417–1441 (LNLSSVSKTGQASTSTPNLLNLKNI) are enriched in polar residues. Low complexity predominate over residues 1442–1478 (PTTTNNSNSTTTTTTTTPTGKPQFSLNLSSLSKSSSS). Residues 1479-1491 (TETVPPSQPNQPI) show a composition bias toward polar residues. The segment covering 1509-1528 (STTTTTTTTTPPPINNSNNT) has biased composition (low complexity). Residues 1730 to 2034 (FKDLKRVAKG…TKFIAIKPTI (305 aa)) enclose the Protein kinase domain. Residues 1736 to 1744 (VAKGAYGTV) and Lys-1760 each bind ATP. Residue Asp-1858 is the Proton acceptor of the active site. The Tyrosine-protein phosphatase domain occupies 2130–2271 (RPSKVASFMY…LCRWGKQRRN (142 aa)). The tract at residues 2379-2404 (NINNNNNNNSNNSKSKQQQQQQQNQN) is disordered.

This sequence belongs to the protein kinase superfamily. Ser/Thr protein kinase family.

It catalyses the reaction L-seryl-[protein] + ATP = O-phospho-L-seryl-[protein] + ADP + H(+). The catalysed reaction is L-threonyl-[protein] + ATP = O-phospho-L-threonyl-[protein] + ADP + H(+). The sequence is that of Probable serine/threonine-protein kinase DDB_G0277071 from Dictyostelium discoideum (Social amoeba).